We begin with the raw amino-acid sequence, 183 residues long: uncharacterized protein (183 aa).

This is an uncharacterized protein from Saccharomyces cerevisiae (strain ATCC 204508 / S288c) (Baker's yeast).